The following is a 342-amino-acid chain: Pre-mRNA-splicing factor 18 (342 aa).

This sequence belongs to the PRP18 family. Interacts with the spliceosome. Part of a complex containing U4/U6 snRNPs.

Its subcellular location is the nucleus speckle. In terms of biological role, participates in the second step of pre-mRNA splicing. In Danio rerio (Zebrafish), this protein is Pre-mRNA-splicing factor 18 (prpf18).